Reading from the N-terminus, the 182-residue chain is Crossover junction endodeoxyribonuclease RuvC (182 aa).

Catalysis depends on residues D7, E69, and D141. 3 residues coordinate Mg(2+): D7, E69, and D141.

The protein belongs to the RuvC family. Homodimer which binds Holliday junction (HJ) DNA. The HJ becomes 2-fold symmetrical on binding to RuvC with unstacked arms; it has a different conformation from HJ DNA in complex with RuvA. In the full resolvosome a probable DNA-RuvA(4)-RuvB(12)-RuvC(2) complex forms which resolves the HJ. Requires Mg(2+) as cofactor.

It localises to the cytoplasm. The enzyme catalyses Endonucleolytic cleavage at a junction such as a reciprocal single-stranded crossover between two homologous DNA duplexes (Holliday junction).. Functionally, the RuvA-RuvB-RuvC complex processes Holliday junction (HJ) DNA during genetic recombination and DNA repair. Endonuclease that resolves HJ intermediates. Cleaves cruciform DNA by making single-stranded nicks across the HJ at symmetrical positions within the homologous arms, yielding a 5'-phosphate and a 3'-hydroxyl group; requires a central core of homology in the junction. The consensus cleavage sequence is 5'-(A/T)TT(C/G)-3'. Cleavage occurs on the 3'-side of the TT dinucleotide at the point of strand exchange. HJ branch migration catalyzed by RuvA-RuvB allows RuvC to scan DNA until it finds its consensus sequence, where it cleaves and resolves the cruciform DNA. This is Crossover junction endodeoxyribonuclease RuvC from Polaromonas sp. (strain JS666 / ATCC BAA-500).